The chain runs to 261 residues: MTHQTHAYHMVNPSPWPLTGALSALLMTSGLIMWFHFNSTILLMLGLTTNMLTMYQWWRDVIRESTFQGHHTPNVQKGLRYGMILFIISEVLFFTGFFWAFYHSSLAPTPELGGCWPPTGIHPLNPLEVPLLNTSVLLASGVSITWAHHSLMEGNRNHMLQALFITIALGVYFTLLQASEYYEAPFTISDGVYGSTFFVATGFHGLHVIIGSTFLIVCFFRQLKFHFTSNHHFGFEAAAWYWHFVDVVWLFLYVSIYWWGS.

Topologically, residues 1–15 (MTHQTHAYHMVNPSP) are mitochondrial matrix. Residues 16 to 34 (WPLTGALSALLMTSGLIMW) traverse the membrane as a helical segment. The Mitochondrial intermembrane segment spans residues 35–40 (FHFNST). Residues 41 to 66 (ILLMLGLTTNMLTMYQWWRDVIREST) traverse the membrane as a helical segment. The Mitochondrial matrix portion of the chain corresponds to 67–72 (FQGHHT). The chain crosses the membrane as a helical span at residues 73–105 (PNVQKGLRYGMILFIISEVLFFTGFFWAFYHSS). Residues 106–128 (LAPTPELGGCWPPTGIHPLNPLE) lie on the Mitochondrial intermembrane side of the membrane. Residues 129–152 (VPLLNTSVLLASGVSITWAHHSLM) form a helical membrane-spanning segment. The Mitochondrial matrix segment spans residues 153–155 (EGN). The helical transmembrane segment at 156-183 (RNHMLQALFITIALGVYFTLLQASEYYE) threads the bilayer. The Mitochondrial intermembrane portion of the chain corresponds to 184–190 (APFTISD). The helical transmembrane segment at 191-223 (GVYGSTFFVATGFHGLHVIIGSTFLIVCFFRQL) threads the bilayer. Residues 224–232 (KFHFTSNHH) are Mitochondrial matrix-facing. Residues 233–256 (FGFEAAAWYWHFVDVVWLFLYVSI) traverse the membrane as a helical segment. Over 257–261 (YWWGS) the chain is Mitochondrial intermembrane.

Belongs to the cytochrome c oxidase subunit 3 family. In terms of assembly, component of the cytochrome c oxidase (complex IV, CIV), a multisubunit enzyme composed of 14 subunits. The complex is composed of a catalytic core of 3 subunits MT-CO1, MT-CO2 and MT-CO3, encoded in the mitochondrial DNA, and 11 supernumerary subunits COX4I, COX5A, COX5B, COX6A, COX6B, COX6C, COX7A, COX7B, COX7C, COX8 and NDUFA4, which are encoded in the nuclear genome. The complex exists as a monomer or a dimer and forms supercomplexes (SCs) in the inner mitochondrial membrane with NADH-ubiquinone oxidoreductase (complex I, CI) and ubiquinol-cytochrome c oxidoreductase (cytochrome b-c1 complex, complex III, CIII), resulting in different assemblies (supercomplex SCI(1)III(2)IV(1) and megacomplex MCI(2)III(2)IV(2)).

Its subcellular location is the mitochondrion inner membrane. The enzyme catalyses 4 Fe(II)-[cytochrome c] + O2 + 8 H(+)(in) = 4 Fe(III)-[cytochrome c] + 2 H2O + 4 H(+)(out). Its function is as follows. Component of the cytochrome c oxidase, the last enzyme in the mitochondrial electron transport chain which drives oxidative phosphorylation. The respiratory chain contains 3 multisubunit complexes succinate dehydrogenase (complex II, CII), ubiquinol-cytochrome c oxidoreductase (cytochrome b-c1 complex, complex III, CIII) and cytochrome c oxidase (complex IV, CIV), that cooperate to transfer electrons derived from NADH and succinate to molecular oxygen, creating an electrochemical gradient over the inner membrane that drives transmembrane transport and the ATP synthase. Cytochrome c oxidase is the component of the respiratory chain that catalyzes the reduction of oxygen to water. Electrons originating from reduced cytochrome c in the intermembrane space (IMS) are transferred via the dinuclear copper A center (CU(A)) of subunit 2 and heme A of subunit 1 to the active site in subunit 1, a binuclear center (BNC) formed by heme A3 and copper B (CU(B)). The BNC reduces molecular oxygen to 2 water molecules using 4 electrons from cytochrome c in the IMS and 4 protons from the mitochondrial matrix. The polypeptide is Cytochrome c oxidase subunit 3 (MT-CO3) (Eudorcas thomsonii (Thomson's gazelle)).